The chain runs to 442 residues: Zinc finger protein sfp1 (442 aa).

Positions 193–208 (AASSDMSSDEASSQAE) are enriched in low complexity. Disordered stretches follow at residues 193–219 (AASS…MPES) and 304–333 (SPFV…HDSP). 2 consecutive C2H2-type zinc fingers follow at residues 350–375 (YKCP…LHGH) and 399–422 (YRCE…THSH).

Its subcellular location is the cytoplasm. The protein localises to the nucleus. The chain is Zinc finger protein sfp1 (sfp1) from Schizosaccharomyces pombe (strain 972 / ATCC 24843) (Fission yeast).